Reading from the N-terminus, the 336-residue chain is Mitochondrial thiamine diphosphate carrier 1 (336 aa).

6 consecutive transmembrane segments (helical) span residues 11 to 27 (RRAL…GGIS), 88 to 105 (VPAL…FTVL), 127 to 150 (YLSY…FDLL), 182 to 199 (LYSG…YAGL), 230 to 246 (SVSS…AGTF), and 303 to 322 (GLFP…FVVY). Solcar repeat units lie at residues 11–111 (RRAL…LKTF), 124–210 (LSPY…FKRS), and 231–328 (VSSF…ISDW).

The protein belongs to the mitochondrial carrier (TC 2.A.29) family. As to expression, ubiquitous with highest expression in pollen.

The protein localises to the mitochondrion inner membrane. In terms of biological role, mitochondrial transporter that mediates uptake of thiamine diphosphate (ThDP) into mitochondria. In Zea mays (Maize), this protein is Mitochondrial thiamine diphosphate carrier 1.